Reading from the N-terminus, the 453-residue chain is UDP-glycosyltransferase 79B3 (453 aa).

UDP-alpha-D-glucose-binding positions include Ser266, 325 to 327 (VQQ), 342 to 350 (HCGFGSMWE), and 364 to 367 (LGDQ).

It belongs to the UDP-glycosyltransferase family.

The chain is UDP-glycosyltransferase 79B3 (UGT79B3) from Arabidopsis thaliana (Mouse-ear cress).